The primary structure comprises 177 residues: ECF RNA polymerase sigma factor SigL (177 aa).

Residues 18–85 (LYDEHAAVLW…MIIDERRSAR (68 aa)) form a sigma-70 factor domain-2 region. An Interaction with polymerase core subunit RpoC motif is present at residues 42–45 (DVVQ). A sigma-70 factor domain-4 region spans residues 119–167 (ALAQLSAEHRAVIQRSYYRGWSTAQIATDLGIAEGTVKSRLHYAVRALR). The H-T-H motif DNA-binding region spans 141–160 (TAQIATDLGIAEGTVKSRLH).

It belongs to the sigma-70 factor family. ECF subfamily. As to quaternary structure, interacts transiently with the RNA polymerase catalytic core formed by RpoA, RpoB, RpoC and RpoZ (2 alpha, 1 beta, 1 beta' and 1 omega subunit) to form the RNA polymerase holoenzyme that can initiate transcription. Interacts (via sigma-70 factor domain 4) with anti-sigma-L factor RslA.

Its function is as follows. Sigma factors are initiation factors that promote the attachment of RNA polymerase to specific initiation sites and are then released. Extracytoplasmic function (ECF) sigma factors are held in an inactive form by an anti-sigma factor until released by regulated intramembrane proteolysis. The sequence is that of ECF RNA polymerase sigma factor SigL (sigL) from Mycobacterium tuberculosis (strain ATCC 35801 / TMC 107 / Erdman).